The sequence spans 352 residues: Sphingosine 1-phosphate receptor 2 (352 aa).

Residues 1-34 (MGGLYSEYLNPEKVLEHYNYTKETLDMQETTSRK) lie on the Extracellular side of the membrane. N19 is a glycosylation site (N-linked (GlcNAc...) asparagine). Residues 35–59 (VASAFIIILCCAIVVENLLVLIAVA) traverse the membrane as a helical segment. Topologically, residues 60-66 (RNSKFHS) are cytoplasmic. A helical membrane pass occupies residues 67 to 95 (AMYLFLGNLAASDLLAGVAFVANTLLSGH). Topologically, residues 96–109 (VTLSLTPVQWFARE) are extracellular. A helical transmembrane segment spans residues 110 to 128 (GSAFITLSASVFSLLAIAI). Residues 129-147 (ERQVALAKVKLYGSDKSCR) lie on the Cytoplasmic side of the membrane. The helical transmembrane segment at 148–173 (MLMLIGASWLISLILGGLPILGWNCL) threads the bilayer. Topologically, residues 174 to 189 (NQLEACSTVLPLYAKH) are extracellular. The chain crosses the membrane as a helical span at residues 190-210 (YVLCVVTIFSVILLAIVALYV). Over 211–233 (RIYFVVRSSHADVAGPQTLALLK) the chain is Cytoplasmic. Residues 234 to 255 (TVTIVLGVFIICWLPAFSILLL) form a helical membrane-spanning segment. Residues 256-271 (DSTCPVRACPVLYKAH) are Extracellular-facing. Residues 272-292 (YFFAFATLNSLLNPVIYTWRS) form a helical membrane-spanning segment. Residues 293–352 (RDLRREVLRPLQCWRRGKGVTGRRGGNPGHRLLPLRSSSSLERGMHMPTSPTFLEGNTVV) are Cytoplasmic-facing. C305 carries the S-palmitoyl cysteine lipid modification. The segment at 333 to 352 (LERGMHMPTSPTFLEGNTVV) is disordered.

This sequence belongs to the G-protein coupled receptor 1 family. As to expression, most abundant in heart and lung; low, but clearly observed in kidney, liver and thymus; much lower but detectable in brain, testis, stomach and intestine. Not significantly detected in any of the sections of embryonic day (E) 14-18, except in embryonic brain.

The protein localises to the cell membrane. Its function is as follows. Receptor for the lysosphingolipid sphingosine 1-phosphate (S1P). S1P is a bioactive lysophospholipid that elicits diverse physiological effects on most types of cells and tissues. Receptor for the chemokine-like protein FAM19A5. Mediates the inhibitory effect of FAM19A5 on vascular smooth muscle cell proliferation and migration. In lymphoid follicles, couples the binding of S1P to the activation of GNA13 and downstream inhibition of AKT activation leading to suppression of germinal center (GC) B cell growth and migration outside the GC niche. This Mus musculus (Mouse) protein is Sphingosine 1-phosphate receptor 2 (S1pr2).